The primary structure comprises 152 residues: Putative rho GDP-dissociation inhibitor 2 (152 aa).

It belongs to the Rho GDI family.

It localises to the cytoplasm. In terms of biological role, regulates the GDP/GTP exchange reaction of the Rho proteins by inhibiting the dissociation of GDP from them, and the subsequent binding of GTP to them. In Dictyostelium discoideum (Social amoeba), this protein is Putative rho GDP-dissociation inhibitor 2 (rdiB).